We begin with the raw amino-acid sequence, 206 residues long: High frequency lysogenization protein HflD homolog (206 aa).

This sequence belongs to the HflD family.

Its subcellular location is the cytoplasm. It localises to the cell inner membrane. The sequence is that of High frequency lysogenization protein HflD homolog from Idiomarina loihiensis (strain ATCC BAA-735 / DSM 15497 / L2-TR).